The following is a 109-amino-acid chain: Parvalbumin beta 2 (109 aa).

A2 is subject to N-acetylalanine. EF-hand domains follow at residues K39–G74 and L78–A109. Positions 52, 54, 56, 58, 60, 63, 91, 93, 95, 97, and 102 each coordinate Ca(2+).

This sequence belongs to the parvalbumin family. In terms of assembly, monomer.

In muscle, parvalbumin is thought to be involved in relaxation after contraction. It binds two calcium ions. The polypeptide is Parvalbumin beta 2 (Gadus morhua (Atlantic cod)).